Reading from the N-terminus, the 84-residue chain is Sulfur carrier protein TusA (84 aa).

The active-site Cysteine persulfide intermediate is the Cys21.

Belongs to the sulfur carrier protein TusA family.

Its subcellular location is the cytoplasm. Sulfur carrier protein which probably makes part of a sulfur-relay system. The protein is Sulfur carrier protein TusA of Pseudomonas syringae pv. syringae (strain B728a).